Reading from the N-terminus, the 360-residue chain is NAD(P)H-quinone oxidoreductase subunit 1, chloroplastic (360 aa).

The next 9 membrane-spanning stretches (helical) occupy residues 27–47 (IWIF…VLVI), 98–118 (FSIG…VIPF), 129–149 (IGIF…LMSG), 165–185 (AAQS…ISLL), 203–223 (FWGW…ISSL), 248–268 (YSGI…LISS), 269–289 (LFVT…ISIL), 297–317 (IFGT…FLFI), and 340–360 (FLLP…LFSL).

This sequence belongs to the complex I subunit 1 family. As to quaternary structure, NDH is composed of at least 16 different subunits, 5 of which are encoded in the nucleus.

It is found in the plastid. The protein localises to the chloroplast thylakoid membrane. The catalysed reaction is a plastoquinone + NADH + (n+1) H(+)(in) = a plastoquinol + NAD(+) + n H(+)(out). It carries out the reaction a plastoquinone + NADPH + (n+1) H(+)(in) = a plastoquinol + NADP(+) + n H(+)(out). In terms of biological role, NDH shuttles electrons from NAD(P)H:plastoquinone, via FMN and iron-sulfur (Fe-S) centers, to quinones in the photosynthetic chain and possibly in a chloroplast respiratory chain. The immediate electron acceptor for the enzyme in this species is believed to be plastoquinone. Couples the redox reaction to proton translocation, and thus conserves the redox energy in a proton gradient. This is NAD(P)H-quinone oxidoreductase subunit 1, chloroplastic from Barbarea verna (Land cress).